The following is a 452-amino-acid chain: UDP-N-acetylmuramoylalanine--D-glutamate ligase (452 aa).

119-125 (GSNGKTT) is a binding site for ATP.

Belongs to the MurCDEF family.

The protein resides in the cytoplasm. The enzyme catalyses UDP-N-acetyl-alpha-D-muramoyl-L-alanine + D-glutamate + ATP = UDP-N-acetyl-alpha-D-muramoyl-L-alanyl-D-glutamate + ADP + phosphate + H(+). The protein operates within cell wall biogenesis; peptidoglycan biosynthesis. Functionally, cell wall formation. Catalyzes the addition of glutamate to the nucleotide precursor UDP-N-acetylmuramoyl-L-alanine (UMA). This is UDP-N-acetylmuramoylalanine--D-glutamate ligase from Streptococcus equi subsp. zooepidemicus (strain MGCS10565).